The sequence spans 718 residues: MRIDYTERMPQSYKMHSSMCLELKRLVDRIMRIFPDIEDARPGCSSGIQTLCLLHNALDKTKQLLQYCSESSKLYMAVTGDAILARGSRAKKSLEQCLNDIRSIVPTILEIKISQIVQDLRSTQLTLEFSEEEAGKAIRELMQKSTSSSASPDEIKDFHYAALKLQLSTPEAIVTERRSLKIICEDHKQNSFTHHQSIDDSLHANAAEAEASEEHNGTLPEKFKCTLSRTVMYDPVIISSGNTFERMQIQKWFDEGNDSCPISKRKLDDFTLKPNVELKSQISEWCAKNGLDVQDPARKHVKASNSIDFSVSIASFGSSLYNIPDHSGISITDFNSSYSIDSSSYSKMSKGGYFTPMQRIDSASGAGDTDSSHSEIEIDPLCGLTNLPWDAQIKVVEDVRSRFEHSTRAFRSMSPSKFLEPLITYLKNALERNGTAGEIIKGGLDLLLAFLSGNRRAIESLEEEVFKMFSVFLESEVVAEEALNILEVLSNHPHGPSKITSSGSLSSLLKIVESQAEHLQEQAMITLKNLSSSMEICLEMVSLDFIQKLTSFLQQKVFCKHSIIILKNLCSTEKGRGCITETPDCLASIAELLESNVPEEQENAISILLQLCVQKIEYCCLVVREATDIYSSLILISNNGTEEVKVSASELLRALVEVDSDKEEEEEVSSRPEGRTTASPTSQVVTPVTHPEPVKITPSPKKSGLFGFNFSSLKKKKK.

The U-box domain maps to 218 to 292; it reads TLPEKFKCTL…SEWCAKNGLD (75 aa). ARM repeat units follow at residues 493–532, 534–571, and 573–613; these read PHGPSKITSSGSLSSLLKIVESQAEHLQEQAMITLKNLSS, MEICLEMVSLDFIQKLTSFLQQKVFCKHSIIILKNLCS, and EKGR…QLCV. The segment at 662-704 is disordered; that stretch reads KEEEEEVSSRPEGRTTASPTSQVVTPVTHPEPVKITPSPKKSG. A compositionally biased stretch (polar residues) spans 676-686; that stretch reads TTASPTSQVVT.

It carries out the reaction S-ubiquitinyl-[E2 ubiquitin-conjugating enzyme]-L-cysteine + [acceptor protein]-L-lysine = [E2 ubiquitin-conjugating enzyme]-L-cysteine + N(6)-ubiquitinyl-[acceptor protein]-L-lysine.. The protein operates within protein modification; protein ubiquitination. Functions as an E3 ubiquitin ligase. The polypeptide is U-box domain-containing protein 5 (PUB5) (Arabidopsis thaliana (Mouse-ear cress)).